A 157-amino-acid chain; its full sequence is Large ribosomal subunit protein bL17 (157 aa).

The tract at residues 124 to 157 (AAPVVSKQDRAKRVKGSKKAESRSQENEGGDAAE) is disordered.

The protein belongs to the bacterial ribosomal protein bL17 family. As to quaternary structure, part of the 50S ribosomal subunit. Contacts protein L32.

The protein is Large ribosomal subunit protein bL17 of Chlorobaculum tepidum (strain ATCC 49652 / DSM 12025 / NBRC 103806 / TLS) (Chlorobium tepidum).